A 322-amino-acid chain; its full sequence is D-alanine--D-alanine ligase (322 aa).

An ATP-grasp domain is found at 108-311 (KEFYYNAELP…FPSLLDTLIE (204 aa)). 136-192 (IEDLGLPLVVKPACAGSSIGISLAHTEEELLAGINHARDCSAGAIMVEQFIKGRELT) provides a ligand contact to ATP. Mg(2+) is bound by residues D265, E278, and N280.

It belongs to the D-alanine--D-alanine ligase family. Mg(2+) serves as cofactor. Mn(2+) is required as a cofactor.

It is found in the cytoplasm. The catalysed reaction is 2 D-alanine + ATP = D-alanyl-D-alanine + ADP + phosphate + H(+). It participates in cell wall biogenesis; peptidoglycan biosynthesis. Its function is as follows. Cell wall formation. This Desulfotalea psychrophila (strain LSv54 / DSM 12343) protein is D-alanine--D-alanine ligase.